Reading from the N-terminus, the 496-residue chain is Glycylpeptide N-tetradecanoyltransferase 1 (496 aa).

The disordered stretch occupies residues 1–82 (MADESETAVK…SAQDQPVKMN (82 aa)). 2 positions are modified to phosphoserine: Ser31 and Ser47. Residues 55-66 (KKKKKKQKKKKE) show a composition bias toward basic residues. Ser83 is modified (phosphoserine). Residues Gln118, Phe119, Trp120, Phe247, Leu248, Cys249, Val250, Ser256, Arg258, Val259, and Ala260 each contribute to the tetradecanoyl-CoA site.

It belongs to the NMT family.

The protein resides in the cytoplasm. Its subcellular location is the cytosol. It localises to the membrane. The enzyme catalyses N-terminal glycyl-[protein] + tetradecanoyl-CoA = N-tetradecanoylglycyl-[protein] + CoA + H(+). The catalysed reaction is N-terminal glycyl-L-lysyl-[protein] + tetradecanoyl-CoA = N-terminal glycyl-(N(6)-tetradecanoyl)-L-lysyl-[protein] + CoA + H(+). Adds a myristoyl group to the N-terminal glycine residue of certain cellular and viral proteins. Also able to mediate N-terminal lysine myristoylation of proteins: catalyzes myristoylation of ARF6 on both 'Gly-2' and 'Lys-3'. Lysine myristoylation is required to maintain ARF6 on membranes during the GTPase cycle. This Pongo abelii (Sumatran orangutan) protein is Glycylpeptide N-tetradecanoyltransferase 1 (NMT1).